The following is a 381-amino-acid chain: Neuropeptide Y receptor type 2 (381 aa).

Residues 1 to 35 (MGPIGAEADENQTVEEMKVEQYGPQTTPRGELVPD) form a disordered region. The Extracellular segment spans residues 1–51 (MGPIGAEADENQTVEEMKVEQYGPQTTPRGELVPDPEPELIDSTKLIEVQV). The N-linked (GlcNAc...) asparagine glycan is linked to asparagine 11. The chain crosses the membrane as a helical span at residues 52–72 (VLILAYCSIILLGVIGNSLVI). The Cytoplasmic segment spans residues 73-86 (HVVIKFKSMRTVTN). The chain crosses the membrane as a helical span at residues 87-107 (FFIANLAVADLLVNTLCLPFT). At 108 to 124 (LTYTLMGEWKMGPVLCH) the chain is on the extracellular side. Cysteine 123 and cysteine 203 are joined by a disulfide. A helical transmembrane segment spans residues 125–145 (LVPYAQGLAVQVSTITLTVIA). The Cytoplasmic segment spans residues 146-165 (LDRHRCIVYHLESKISKRIS). The chain crosses the membrane as a helical span at residues 166–186 (FLIIGLAWGISALLASPLAIF). The Extracellular segment spans residues 187-216 (REYSLIEIIPDFEIVACTEKWPGEEKSIYG). The chain crosses the membrane as a helical span at residues 217–237 (TVYSLSSLLILYVLPLGIISF). At 238–268 (SYTRIWSKLKNHVSPGAANDHYHQRRQKTTK) the chain is on the cytoplasmic side. A helical membrane pass occupies residues 269 to 289 (MLVCVVVVFAVSWLPLHAFQL). Residues 290-304 (AVDIDSQVLDLKEYK) are Extracellular-facing. A helical transmembrane segment spans residues 305–325 (LIFTVFHIIAMCSTFANPLLY). Topologically, residues 326–381 (GWMNSNYRKAFLSAFRCEQRLDAIHSEVSVTFKAKKNLEVRKNSGPNDSFTEATNV) are cytoplasmic. Cysteine 342 carries S-palmitoyl cysteine lipidation.

Belongs to the G-protein coupled receptor 1 family. High levels in amygdala, corpus callosum, hippocampus and subthalamic nucleus. Also detectable in caudate nucleus, hypothalamus and substantia nigra.

It is found in the cell membrane. Functionally, receptor for neuropeptide Y and peptide YY. The rank order of affinity of this receptor for pancreatic polypeptides is PYY &gt; NPY &gt; PYY (3-36) &gt; NPY (2-36) &gt; [Ile-31, Gln-34] PP &gt; [Leu-31, Pro-34] NPY &gt; PP, [Pro-34] PYY and NPY free acid. The chain is Neuropeptide Y receptor type 2 (NPY2R) from Homo sapiens (Human).